The following is a 183-amino-acid chain: Ribulose bisphosphate carboxylase small subunit, chloroplastic (183 aa).

The N-terminal 59 residues, 1 to 59 (MASSMISSGTVATVSADRPAPAQARMVAPFTGLKSSSASPVTRKSNDITSIASNGGRVQ), are a transit peptide targeting the chloroplast.

Belongs to the RuBisCO small chain family. Heterohexadecamer of 8 large and 8 small subunits.

The protein resides in the plastid. It is found in the chloroplast. In terms of biological role, ruBisCO catalyzes two reactions: the carboxylation of D-ribulose 1,5-bisphosphate, the primary event in carbon dioxide fixation, as well as the oxidative fragmentation of the pentose substrate. Both reactions occur simultaneously and in competition at the same active site. Although the small subunit is not catalytic it is essential for maximal activity. The sequence is that of Ribulose bisphosphate carboxylase small subunit, chloroplastic from Malus sp. (Crab apple).